A 1291-amino-acid polypeptide reads, in one-letter code: Cytoplasmic FMR1-interacting protein (1291 aa).

Positions 1269–1291 (HPSVISSSSHYQDPQKLRQSMNN) are disordered. The span at 1271-1291 (SVISSSSHYQDPQKLRQSMNN) shows a compositional bias: polar residues.

This sequence belongs to the CYFIP family. In terms of assembly, interacts with Fmr1 and Rac1. Component of the WAVE complex composed of Hem/Kette, Scar/Wave and Cyfip where it binds through its C-terminus directly to Hem.

It localises to the cytoplasm. Its function is as follows. Plays a role in guidance and morphology of central and peripheral axons and in synaptic morphology. Also required for formation of cell membrane protrusions and for bristle development. This Drosophila pseudoobscura pseudoobscura (Fruit fly) protein is Cytoplasmic FMR1-interacting protein.